Reading from the N-terminus, the 443-residue chain is 26S proteasome regulatory subunit rpn501 (443 aa).

Serine 209 bears the Phosphoserine mark. A PCI domain is found at 230–402; the sequence is DVCKYYRAVY…QVISFKKSQN (173 aa).

Belongs to the proteasome subunit p55 family.

The protein localises to the nucleus. Acts as a regulatory subunit of the 26S proteasome which is involved in the ATP-dependent degradation of ubiquitinated proteins. Required for proper proteasome assembly. This chain is 26S proteasome regulatory subunit rpn501 (rpn501), found in Schizosaccharomyces pombe (strain 972 / ATCC 24843) (Fission yeast).